A 179-amino-acid chain; its full sequence is Probable chorismate pyruvate-lyase (179 aa).

Arg-82, Leu-120, and Glu-165 together coordinate substrate.

The protein belongs to the UbiC family.

Its subcellular location is the cytoplasm. The catalysed reaction is chorismate = 4-hydroxybenzoate + pyruvate. It participates in cofactor biosynthesis; ubiquinone biosynthesis. Its function is as follows. Removes the pyruvyl group from chorismate, with concomitant aromatization of the ring, to provide 4-hydroxybenzoate (4HB) for the ubiquinone pathway. This is Probable chorismate pyruvate-lyase from Vibrio vulnificus (strain CMCP6).